Here is a 146-residue protein sequence, read N- to C-terminus: Late protein OPG112 (146 aa).

Residues leucine 10–phenylalanine 32 traverse the membrane as a helical segment.

This sequence belongs to the orthopoxvirus OPG112 family.

The protein localises to the host membrane. It is found in the host cytoplasm. Functionally, contributes to the formation of crescents and immature virions (IV). Interacts with phosphatidylinositol-3-phosphate (PI3P) and phosphatidylinositol-4-phosphate (PI4P) lipids in order to form virion membranes. Mechanistically, mediates proper formation of OPG125-hexamers, and hence the honey comb lattice and spherical immature virus. In Bos taurus (Bovine), this protein is Late protein OPG112 (OPG112).